The chain runs to 377 residues: Dual-specificity RNA methyltransferase RlmN (377 aa).

The Proton acceptor role is filled by Glu102. Residues 108 to 345 form the Radical SAM core domain; it reads EPDRRTLCVS…AVVRKNRGGD (238 aa). A disulfide bond links Cys115 and Cys350. Cys122, Cys126, and Cys129 together coordinate [4Fe-4S] cluster. Residues 177-178, Ser209, 231-233, and Asn307 each bind S-adenosyl-L-methionine; these read GE and SLN. Cys350 serves as the catalytic S-methylcysteine intermediate. A disordered region spans residues 354-377; the sequence is AAEGGPGDPRRPAPPPLTRLPAAG.

This sequence belongs to the radical SAM superfamily. RlmN family. It depends on [4Fe-4S] cluster as a cofactor.

It is found in the cytoplasm. The catalysed reaction is adenosine(2503) in 23S rRNA + 2 reduced [2Fe-2S]-[ferredoxin] + 2 S-adenosyl-L-methionine = 2-methyladenosine(2503) in 23S rRNA + 5'-deoxyadenosine + L-methionine + 2 oxidized [2Fe-2S]-[ferredoxin] + S-adenosyl-L-homocysteine. The enzyme catalyses adenosine(37) in tRNA + 2 reduced [2Fe-2S]-[ferredoxin] + 2 S-adenosyl-L-methionine = 2-methyladenosine(37) in tRNA + 5'-deoxyadenosine + L-methionine + 2 oxidized [2Fe-2S]-[ferredoxin] + S-adenosyl-L-homocysteine. Specifically methylates position 2 of adenine 2503 in 23S rRNA and position 2 of adenine 37 in tRNAs. m2A2503 modification seems to play a crucial role in the proofreading step occurring at the peptidyl transferase center and thus would serve to optimize ribosomal fidelity. The chain is Dual-specificity RNA methyltransferase RlmN from Anaeromyxobacter sp. (strain Fw109-5).